The primary structure comprises 408 residues: Multifunctional CCA protein (408 aa).

Residues G8 and R11 each contribute to the ATP site. CTP is bound by residues G8 and R11. Positions 21 and 23 each coordinate Mg(2+). Positions 91, 137, and 140 each coordinate ATP. The CTP site is built by R91, R137, and R140. The HD domain maps to 228 to 329 (TGVHVLSVLE…LELLQSFDVY (102 aa)).

This sequence belongs to the tRNA nucleotidyltransferase/poly(A) polymerase family. Bacterial CCA-adding enzyme type 1 subfamily. Monomer. Can also form homodimers and oligomers. Mg(2+) serves as cofactor. The cofactor is Ni(2+).

It carries out the reaction a tRNA precursor + 2 CTP + ATP = a tRNA with a 3' CCA end + 3 diphosphate. The catalysed reaction is a tRNA with a 3' CCA end + 2 CTP + ATP = a tRNA with a 3' CCACCA end + 3 diphosphate. In terms of biological role, catalyzes the addition and repair of the essential 3'-terminal CCA sequence in tRNAs without using a nucleic acid template. Adds these three nucleotides in the order of C, C, and A to the tRNA nucleotide-73, using CTP and ATP as substrates and producing inorganic pyrophosphate. tRNA 3'-terminal CCA addition is required both for tRNA processing and repair. Also involved in tRNA surveillance by mediating tandem CCA addition to generate a CCACCA at the 3' terminus of unstable tRNAs. While stable tRNAs receive only 3'-terminal CCA, unstable tRNAs are marked with CCACCA and rapidly degraded. In Pseudomonas syringae pv. syringae (strain B728a), this protein is Multifunctional CCA protein.